Consider the following 284-residue polypeptide: Sulfotransferase 2A1 (284 aa).

The 3'-phosphoadenylyl sulfate site is built by Lys-43, Ser-44, Gly-45, Thr-46, Asn-47, and Trp-48. His-98 acts as the Proton acceptor in catalysis. The 3'-phosphoadenylyl sulfate site is built by Arg-120, Ser-128, Tyr-183, Ser-217, Met-222, Arg-246, Lys-247, and Gly-248.

It belongs to the sulfotransferase 1 family. In terms of assembly, homodimer.

The protein resides in the cytoplasm. The catalysed reaction is an alcohol + 3'-phosphoadenylyl sulfate = an alkyl sulfate + adenosine 3',5'-bisphosphate + H(+). The enzyme catalyses taurolithocholate + 3'-phosphoadenylyl sulfate = taurolithocholate 3-sulfate + adenosine 3',5'-bisphosphate + H(+). It carries out the reaction lithocholate + 3'-phosphoadenylyl sulfate = lithocholate sulfate + adenosine 3',5'-bisphosphate + H(+). It catalyses the reaction (24S)-hydroxycholesterol + 3'-phosphoadenylyl sulfate = (24S)-hydroxycholesterol 24-sulfate + adenosine 3',5'-bisphosphate + H(+). The catalysed reaction is (24S)-hydroxycholesterol + 3'-phosphoadenylyl sulfate = (24S)-hydroxycholesterol 3-sulfate + adenosine 3',5'-bisphosphate + H(+). The enzyme catalyses (24S)-hydroxycholesterol 24-sulfate + 3'-phosphoadenylyl sulfate = (24S)-hydroxycholesterol 3,24-disulfate + adenosine 3',5'-bisphosphate + H(+). It carries out the reaction 3beta-hydroxyandrost-5-en-17-one + 3'-phosphoadenylyl sulfate = dehydroepiandrosterone 3-sulfate + adenosine 3',5'-bisphosphate + H(+). It catalyses the reaction pregnenolone + 3'-phosphoadenylyl sulfate = pregnenolone sulfate + adenosine 3',5'-bisphosphate + H(+). The catalysed reaction is androsterone + 3'-phosphoadenylyl sulfate = androsterone 3alpha-sulfate + adenosine 3',5'-bisphosphate + H(+). Sulfotransferase that utilizes 3'-phospho-5'-adenylyl sulfate (PAPS) as sulfonate donor to catalyze the sulfonation of steroids and bile acids in the liver and adrenal glands. Mediates the sulfation of a wide range of steroids and sterols, including pregnenolone, androsterone, DHEA, bile acids, cholesterol and as well many xenobiotics that contain alcohol and phenol functional groups. Sulfonation increases the water solubility of most compounds, and therefore their renal excretion, but it can also result in bioactivation to form active metabolites. Plays an important role in maintening steroid and lipid homeostasis. Plays a key role in bile acid metabolism. In addition, catalyzes the metabolic activation of potent carcinogenic polycyclic arylmethanols. This is Sulfotransferase 2A1 (Sult2a1) from Rattus norvegicus (Rat).